An 875-amino-acid polypeptide reads, in one-letter code: Alanine--tRNA ligase (875 aa).

Residues H564, H568, C666, and H670 each coordinate Zn(2+).

It belongs to the class-II aminoacyl-tRNA synthetase family. As to quaternary structure, homotetramer. The cofactor is Zn(2+).

Its subcellular location is the cytoplasm. It carries out the reaction tRNA(Ala) + L-alanine + ATP = L-alanyl-tRNA(Ala) + AMP + diphosphate. Its function is as follows. Catalyzes the attachment of alanine to tRNA(Ala) in a two-step reaction: alanine is first activated by ATP to form Ala-AMP and then transferred to the acceptor end of tRNA(Ala). Also edits incorrectly charged Ser-tRNA(Ala) and Gly-tRNA(Ala) via its editing domain. In Klebsiella pneumoniae subsp. pneumoniae (strain ATCC 700721 / MGH 78578), this protein is Alanine--tRNA ligase.